Reading from the N-terminus, the 213-residue chain is Orotate phosphoribosyltransferase (213 aa).

K26 serves as a coordination point for 5-phospho-alpha-D-ribose 1-diphosphate. 34-35 (FF) contributes to the orotate binding site. Residues 72–73 (YK), R99, K100, K103, H105, and 124–132 (DDVITAGTA) contribute to the 5-phospho-alpha-D-ribose 1-diphosphate site. 2 residues coordinate orotate: T128 and R156.

The protein belongs to the purine/pyrimidine phosphoribosyltransferase family. PyrE subfamily. In terms of assembly, homodimer. Requires Mg(2+) as cofactor.

It carries out the reaction orotidine 5'-phosphate + diphosphate = orotate + 5-phospho-alpha-D-ribose 1-diphosphate. It functions in the pathway pyrimidine metabolism; UMP biosynthesis via de novo pathway; UMP from orotate: step 1/2. Functionally, catalyzes the transfer of a ribosyl phosphate group from 5-phosphoribose 1-diphosphate to orotate, leading to the formation of orotidine monophosphate (OMP). In Photobacterium profundum (strain SS9), this protein is Orotate phosphoribosyltransferase.